Consider the following 299-residue polypeptide: Putative fructokinase (299 aa).

Position 130 (Thr-130) interacts with ATP. Zn(2+) is bound by residues His-153, Cys-168, His-171, and Cys-174. Residues Pro-182 and 230-234 (GVMQQ) each bind ATP.

It belongs to the ROK (NagC/XylR) family. The cofactor is Mg(2+).

The enzyme catalyses D-fructose + ATP = D-fructose 6-phosphate + ADP + H(+). Inhibited by zinc ions. Functionally, seems to be involved in the degradation of glucomannan. This chain is Putative fructokinase (gmuE), found in Bacillus subtilis (strain 168).